An 81-amino-acid polypeptide reads, in one-letter code: Putative membrane protein insertion efficiency factor (81 aa).

The protein belongs to the UPF0161 family.

The protein resides in the cell inner membrane. Could be involved in insertion of integral membrane proteins into the membrane. The polypeptide is Putative membrane protein insertion efficiency factor (Legionella pneumophila (strain Lens)).